An 874-amino-acid polypeptide reads, in one-letter code: MKTTAEIRQSFLDFFHSKGHQVVESSSLVPENDPTLLFTNAGMNQFKDVFLGMDKRPYSRATTAQRCVRAGGKHNDLENVGYTARHHTFFEMLGNFSFGDYFKQDAINFAWEYLTSPQWLGLPKEKLWVTVYETDDEAYNIWNKDVGVPAERIIRIGDNKGSPYASDNFWAMGDTGPCGPCTEIFYDHGDHIWGGPPGSPEEDGDRYIEIWNVVFMQFNRLADGTMEKLPRPSVDTGMGLERISAVLQHVNSNYEIDIFKTLIAKTAEIVGATDLTNKSLRVIADHIRSCAYLIADGVIPSNEGRGYVLRRIIRRAVRHGHLLGAKESFFYKLVPTLIEVMAEAGKDVKAKQTNVEKLLRLEEEQFARTLERGLSLLDEALSQVKDGILSGEVAFKLYDTYGFPLDLTADVCRERNITIDEQAFDREMEAQRTRAQAASQFGVDYNSVIRVDGETKFEGYTEVESQAKITALFYDGKSVESIEVGQSAVVILENTPFYAESGGQIGDSGYLSTQGVTFNVKDTQKYGQVFGHIGELTQGSLKVGQSVNAIVDAKRRHNTSLNHSATHLLHAALRQILGLHVVQKGSLVSDKALRFDFAQPEAITKEQLSEIETLVNQKIRANFPVQTDIMDIDSAKAKGAMALFGEKYGDKVRVLTMGDFSIELCGGIHAKRTGDIGLFKIITENAVAAGIRRIEAVTGQNAIDWLHNQQRILTQSADLLKSDVNTLVEKIQQLQDKTKKVEKELQGLKEKAAMQAGSDFVKSAVKINGVSVIAQQLDGIETKSLRVMVDDLKNQLGSGVIAFASILDEKVNLVVGVTNDLTAKIKAGELVNLMAQQVGGKGGGRPDMAMAGGSQPENVAQAIKVAQDWLNKNL.

4 residues coordinate Zn(2+): His563, His567, Cys665, and His669.

It belongs to the class-II aminoacyl-tRNA synthetase family. The cofactor is Zn(2+).

It is found in the cytoplasm. It carries out the reaction tRNA(Ala) + L-alanine + ATP = L-alanyl-tRNA(Ala) + AMP + diphosphate. Catalyzes the attachment of alanine to tRNA(Ala) in a two-step reaction: alanine is first activated by ATP to form Ala-AMP and then transferred to the acceptor end of tRNA(Ala). Also edits incorrectly charged Ser-tRNA(Ala) and Gly-tRNA(Ala) via its editing domain. The protein is Alanine--tRNA ligase of Haemophilus influenzae (strain 86-028NP).